Here is a 203-residue protein sequence, read N- to C-terminus: UPF0637 protein MCCL_0722 (203 aa).

Belongs to the UPF0637 family.

The polypeptide is UPF0637 protein MCCL_0722 (Macrococcus caseolyticus (strain JCSC5402) (Macrococcoides caseolyticum)).